A 239-amino-acid chain; its full sequence is 3,4-dihydroxyphthalate decarboxylase (239 aa).

The Proton donor/acceptor role is filled by glutamate 84. The a divalent metal cation site is built by glutamate 84, histidine 103, histidine 105, and histidine 171.

This sequence belongs to the aldolase class II family. Requires a divalent metal cation as cofactor.

It catalyses the reaction 3,4-dihydroxyphthalate + H(+) = 3,4-dihydroxybenzoate + CO2. It functions in the pathway xenobiotic degradation; phthalate degradation. In terms of biological role, catalyzes the decarboxylation of 3,4-dihydroxyphthalate to protocatechuate (3,4-dihydroxybenzoate) during phthalate metabolism. This Terrabacter sp. (strain DBF63) protein is 3,4-dihydroxyphthalate decarboxylase.